A 558-amino-acid chain; its full sequence is Membrane protein insertase YidC (558 aa).

5 helical membrane-spanning segments follow: residues 3–23 (IKRT…FDNW), 364–384 (FVGN…AVFF), 438–458 (LPVV…LASV), 477–497 (PYFI…KLNP), and 508–528 (MMFM…GLVL).

Belongs to the OXA1/ALB3/YidC family. Type 1 subfamily. In terms of assembly, interacts with the Sec translocase complex via SecD. Specifically interacts with transmembrane segments of nascent integral membrane proteins during membrane integration.

Its subcellular location is the cell inner membrane. Required for the insertion and/or proper folding and/or complex formation of integral membrane proteins into the membrane. Involved in integration of membrane proteins that insert both dependently and independently of the Sec translocase complex, as well as at least some lipoproteins. Aids folding of multispanning membrane proteins. This is Membrane protein insertase YidC from Burkholderia mallei (strain NCTC 10247).